A 577-amino-acid polypeptide reads, in one-letter code: Serine/threonine-protein kinase AGC1-5 (577 aa).

Residues 1-12 are compositionally biased toward polar residues; that stretch reads MDLASKKNTANV. Positions 1–151 are disordered; it reads MDLASKKNTA…DYAYGDNLVG (151 aa). Over residues 44–55 the composition is skewed to basic and acidic residues; the sequence is PHFDPKKMDPLV. Composition is skewed to polar residues over residues 69–87 and 110–120; these read TRGTNSEGDLKHNTYSSDG and LTTSETYSPSA. One can recognise a Protein kinase domain in the interval 185–509; sequence FRLLKRLGYG…ATEIKQHPFF (325 aa). Residues 191–199 and Lys-214 each bind ATP; that span reads LGYGDIGSV. Residue Asp-310 is the Proton acceptor of the active site. The AGC-kinase C-terminal domain occupies 510 to 577; that stretch reads EGVNWALVRS…DTAYIDFEYF (68 aa).

The protein belongs to the protein kinase superfamily. AGC Ser/Thr protein kinase family. Interacts with PDPK1/PDK1. Autophosphorylated and phosphorylated by PDPK1/PDK1. As to expression, specifically expressed in pollen grains.

The catalysed reaction is L-seryl-[protein] + ATP = O-phospho-L-seryl-[protein] + ADP + H(+). It carries out the reaction L-threonyl-[protein] + ATP = O-phospho-L-threonyl-[protein] + ADP + H(+). Its activity is regulated as follows. Activated by PDPK1/PDK1. Functions redudantly with AGC1-7 as signaling component in the pollen tube. Required for polarized growth of pollen tubes. In Arabidopsis thaliana (Mouse-ear cress), this protein is Serine/threonine-protein kinase AGC1-5.